The sequence spans 878 residues: Alanine--tRNA ligase (878 aa).

Zn(2+) is bound by residues His567, His571, Cys669, and His673. A disordered region spans residues 841-860; the sequence is AVGGKGGGRPDMAEAGGKDP.

The protein belongs to the class-II aminoacyl-tRNA synthetase family. Zn(2+) serves as cofactor.

The protein resides in the cytoplasm. The enzyme catalyses tRNA(Ala) + L-alanine + ATP = L-alanyl-tRNA(Ala) + AMP + diphosphate. Catalyzes the attachment of alanine to tRNA(Ala) in a two-step reaction: alanine is first activated by ATP to form Ala-AMP and then transferred to the acceptor end of tRNA(Ala). Also edits incorrectly charged Ser-tRNA(Ala) and Gly-tRNA(Ala) via its editing domain. This is Alanine--tRNA ligase from Solibacter usitatus (strain Ellin6076).